Here is a 526-residue protein sequence, read N- to C-terminus: Peptide chain release factor 3 (526 aa).

In terms of domain architecture, tr-type G spans 8–277 (NKRRTFAIIS…GLTEWAPKPQ (270 aa)). GTP contacts are provided by residues 17–24 (SHPDAGKT), 85–89 (DTPGH), and 139–142 (NKLD).

This sequence belongs to the TRAFAC class translation factor GTPase superfamily. Classic translation factor GTPase family. PrfC subfamily.

It is found in the cytoplasm. Its function is as follows. Increases the formation of ribosomal termination complexes and stimulates activities of RF-1 and RF-2. It binds guanine nucleotides and has strong preference for UGA stop codons. It may interact directly with the ribosome. The stimulation of RF-1 and RF-2 is significantly reduced by GTP and GDP, but not by GMP. The sequence is that of Peptide chain release factor 3 from Actinobacillus pleuropneumoniae serotype 5b (strain L20).